The chain runs to 263 residues: uncharacterized protein (263 aa).

The disordered stretch occupies residues Ile-22 to Leu-44. Positions Ser-34–Ser-43 are enriched in low complexity.

The protein resides in the mitochondrion. This is an uncharacterized protein from Schizosaccharomyces pombe (strain 972 / ATCC 24843) (Fission yeast).